Here is a 448-residue protein sequence, read N- to C-terminus: Phosphoglucosamine mutase (448 aa).

Ser100 acts as the Phosphoserine intermediate in catalysis. Mg(2+)-binding residues include Ser100, Asp240, Asp242, and Asp244. A Phosphoserine modification is found at Ser100.

It belongs to the phosphohexose mutase family. It depends on Mg(2+) as a cofactor. Post-translationally, activated by phosphorylation.

It catalyses the reaction alpha-D-glucosamine 1-phosphate = D-glucosamine 6-phosphate. Its function is as follows. Catalyzes the conversion of glucosamine-6-phosphate to glucosamine-1-phosphate. This Bacillus cytotoxicus (strain DSM 22905 / CIP 110041 / 391-98 / NVH 391-98) protein is Phosphoglucosamine mutase.